The following is a 33-amino-acid chain: DCGTIWHYCGTDQSECCEGWKCSRQLCKYVIDW.

3 disulfides stabilise this stretch: cysteine 2–cysteine 17, cysteine 9–cysteine 22, and cysteine 16–cysteine 27. Tryptophan 33 bears the Tryptophan amide mark.

Expressed by the venom gland.

It is found in the secreted. In terms of biological role, blocks transient outward voltage-gated potassium channels in rat ventricular myocytes (thus prolonging action-potential duration) and rat Kv4.2/KCNA4 channels expressed in Xenopus oocytes. Is also a weak blocker of calcium channels in rat cerebellar granule cells. The protein is Kappa-sparatoxin-Hv1a of Heteropoda venatoria (Brown huntsman spider).